The primary structure comprises 188 residues: Mediator of RNA polymerase II transcription subunit 11 (188 aa).

Residues 46-72 adopt a coiled-coil conformation; that stretch reads KNKMEDNANNFKKLITQVENELSAQMQ. The tract at residues 116 to 188 is disordered; sequence DPTSDEPQTT…MTDDDDDMEQ (73 aa). Over residues 123 to 141 the composition is skewed to acidic residues; it reads QTTEEDEEDGSDDLNEDGA. Residues 146–155 show a composition bias toward low complexity; that stretch reads SSTVTSSTTD. Residues 171–180 are compositionally biased toward basic and acidic residues; it reads SQEESGRQMT.

It belongs to the Mediator complex subunit 11 family. As to quaternary structure, component of the Mediator complex.

It is found in the nucleus. Functionally, component of the Mediator complex, a coactivator involved in the regulated transcription of nearly all RNA polymerase II-dependent genes. Mediator functions as a bridge to convey information from gene-specific regulatory proteins to the basal RNA polymerase II transcription machinery. Mediator is recruited to promoters by direct interactions with regulatory proteins and serves as a scaffold for the assembly of a functional pre-initiation complex with RNA polymerase II and the general transcription factors. The chain is Mediator of RNA polymerase II transcription subunit 11 (mdt-11) from Caenorhabditis elegans.